The chain runs to 1050 residues: Sucrose-phosphate synthase 4 (1050 aa).

A disordered region spans residues 134 to 167 (QGRNDAEEDLLSELSEGEKDKNDGEKEKSEVVTT). A Phosphoserine modification is found at Ser148. Basic and acidic residues predominate over residues 149 to 163 (EGEKDKNDGEKEKSE). Ser180 carries the phosphoserine modification.

Belongs to the glycosyltransferase 1 family. As to quaternary structure, homodimer or homotetramer.

It carries out the reaction beta-D-fructose 6-phosphate + UDP-alpha-D-glucose = sucrose 6(F)-phosphate + UDP + H(+). It functions in the pathway glycan biosynthesis; sucrose biosynthesis; sucrose from D-fructose 6-phosphate and UDP-alpha-D-glucose: step 1/2. Its activity is regulated as follows. Activity is regulated by phosphorylation and moderated by concentration of metabolites and light. Functionally, plays a role in photosynthetic sucrose synthesis by catalyzing the rate-limiting step of sucrose biosynthesis from UDP-glucose and fructose- 6-phosphate. Involved in the regulation of carbon partitioning in the leaves of plants. May regulate the synthesis of sucrose and therefore play a major role as a limiting factor in the export of photoassimilates out of the leaf. Plays a role for sucrose availability that is essential for plant growth and fiber elongation. The polypeptide is Sucrose-phosphate synthase 4 (Arabidopsis thaliana (Mouse-ear cress)).